The chain runs to 278 residues: Thiazole synthase (278 aa).

Lys109 acts as the Schiff-base intermediate with DXP in catalysis. 1-deoxy-D-xylulose 5-phosphate contacts are provided by residues Gly170, 197–198, and 219–220; these read AG and NT.

Belongs to the ThiG family. As to quaternary structure, homotetramer. Forms heterodimers with either ThiH or ThiS.

The protein localises to the cytoplasm. The catalysed reaction is [ThiS sulfur-carrier protein]-C-terminal-Gly-aminoethanethioate + 2-iminoacetate + 1-deoxy-D-xylulose 5-phosphate = [ThiS sulfur-carrier protein]-C-terminal Gly-Gly + 2-[(2R,5Z)-2-carboxy-4-methylthiazol-5(2H)-ylidene]ethyl phosphate + 2 H2O + H(+). The protein operates within cofactor biosynthesis; thiamine diphosphate biosynthesis. Catalyzes the rearrangement of 1-deoxy-D-xylulose 5-phosphate (DXP) to produce the thiazole phosphate moiety of thiamine. Sulfur is provided by the thiocarboxylate moiety of the carrier protein ThiS. In vitro, sulfur can be provided by H(2)S. The sequence is that of Thiazole synthase from Cupriavidus taiwanensis (strain DSM 17343 / BCRC 17206 / CCUG 44338 / CIP 107171 / LMG 19424 / R1) (Ralstonia taiwanensis (strain LMG 19424)).